Consider the following 436-residue polypeptide: Eukaryotic translation initiation factor 5 (436 aa).

27–34 (GKGNGIKT) is a GTP binding site. The tract at residues 177 to 203 (NSDKGSSNDDDDDDWEPEPVEPNGMLS) is disordered. Residues 184–195 (NDDDDDDWEPEP) show a composition bias toward acidic residues. In terms of domain architecture, W2 spans 216 to 379 (EKSEEQRLDM…KEAEEETEEE (164 aa)). The span at 396–408 (LRQQKEKAAREAQ) shows a compositional bias: basic and acidic residues. Residues 396–436 (LRQQKEKAAREAQQKSAKATNGNAAAASGANDEEDLDIDDI) are disordered. The span at 409-425 (QKSAKATNGNAAAASGA) shows a compositional bias: low complexity. A compositionally biased stretch (acidic residues) spans 426–436 (NDEEDLDIDDI).

This sequence belongs to the eIF-2-beta/eIF-5 family.

Catalyzes the hydrolysis of GTP bound to the 40S ribosomal initiation complex (40S.mRNA.Met-tRNA[F].eIF-2.GTP) with the subsequent joining of a 60S ribosomal subunit resulting in the release of eIF-2 and the guanine nucleotide. The subsequent joining of a 60S ribosomal subunit results in the formation of a functional 80S initiation complex (80S.mRNA.Met-tRNA[F]). The sequence is that of Eukaryotic translation initiation factor 5 from Caenorhabditis elegans.